A 378-amino-acid polypeptide reads, in one-letter code: Acetylornithine deacetylase (378 aa).

Position 76 (His76) interacts with Zn(2+). The active site involves Asp78. Asp108 contacts Zn(2+). Glu140 is a catalytic residue. Zn(2+) contacts are provided by Glu141, Glu165, and His351.

This sequence belongs to the peptidase M20A family. ArgE subfamily. As to quaternary structure, homodimer. Zn(2+) serves as cofactor. It depends on Co(2+) as a cofactor. Glutathione is required as a cofactor.

It localises to the cytoplasm. The enzyme catalyses N(2)-acetyl-L-ornithine + H2O = L-ornithine + acetate. It participates in amino-acid biosynthesis; L-arginine biosynthesis; L-ornithine from N(2)-acetyl-L-ornithine (linear): step 1/1. Functionally, catalyzes the hydrolysis of the amide bond of N(2)-acetylated L-amino acids. Cleaves the acetyl group from N-acetyl-L-ornithine to form L-ornithine, an intermediate in L-arginine biosynthesis pathway, and a branchpoint in the synthesis of polyamines. This chain is Acetylornithine deacetylase, found in Vibrio parahaemolyticus serotype O3:K6 (strain RIMD 2210633).